The primary structure comprises 495 residues: Glutamate--tRNA ligase (495 aa).

Residues 12 to 22 (PSPTGHLHIGN) carry the 'HIGH' region motif. The 'KMSKS' region signature appears at 259–263 (KLSKR). K262 contributes to the ATP binding site.

It belongs to the class-I aminoacyl-tRNA synthetase family. Glutamate--tRNA ligase type 1 subfamily. Monomer.

The protein localises to the cytoplasm. It carries out the reaction tRNA(Glu) + L-glutamate + ATP = L-glutamyl-tRNA(Glu) + AMP + diphosphate. In terms of biological role, catalyzes the attachment of glutamate to tRNA(Glu) in a two-step reaction: glutamate is first activated by ATP to form Glu-AMP and then transferred to the acceptor end of tRNA(Glu). The chain is Glutamate--tRNA ligase from Pediococcus pentosaceus (strain ATCC 25745 / CCUG 21536 / LMG 10740 / 183-1w).